A 206-amino-acid polypeptide reads, in one-letter code: MSAVRSKICGITRIEDALAAAEAGADAIGLVFYPKSPRAVTVLQARAIIAALPPFITTVGLFVNASRCELNETLDAVALDMLQFHGDETPEECDGYHRPYVKALRVKAGDDIAGVCRTYRNARGVLLDTYVEGVPGGTGETFDWALIPDDLDKPVILAGGLTSANVAQAIAQVRPYAVDVSGGVEKSKGIKDREKILAFMSAVHGT.

Belongs to the TrpF family.

The catalysed reaction is N-(5-phospho-beta-D-ribosyl)anthranilate = 1-(2-carboxyphenylamino)-1-deoxy-D-ribulose 5-phosphate. It functions in the pathway amino-acid biosynthesis; L-tryptophan biosynthesis; L-tryptophan from chorismate: step 3/5. The chain is N-(5'-phosphoribosyl)anthranilate isomerase from Pseudomonas syringae pv. syringae (strain B728a).